The sequence spans 328 residues: tRNA dimethylallyltransferase (328 aa).

Position 25–32 (25–32 (GPTAVGKT)) interacts with ATP. Residue 27–32 (TAVGKT) participates in substrate binding. The interaction with substrate tRNA stretch occupies residues 50-53 (DSMQ).

This sequence belongs to the IPP transferase family. Monomer. It depends on Mg(2+) as a cofactor.

The catalysed reaction is adenosine(37) in tRNA + dimethylallyl diphosphate = N(6)-dimethylallyladenosine(37) in tRNA + diphosphate. In terms of biological role, catalyzes the transfer of a dimethylallyl group onto the adenine at position 37 in tRNAs that read codons beginning with uridine, leading to the formation of N6-(dimethylallyl)adenosine (i(6)A). The polypeptide is tRNA dimethylallyltransferase (Halothermothrix orenii (strain H 168 / OCM 544 / DSM 9562)).